The chain runs to 79 residues: Translational regulator CsrA (79 aa).

The protein belongs to the CsrA/RsmA family. Homodimer; the beta-strands of each monomer intercalate to form a hydrophobic core, while the alpha-helices form wings that extend away from the core.

The protein localises to the cytoplasm. Functionally, a translational regulator that binds mRNA to regulate translation initiation and/or mRNA stability. Usually binds in the 5'-UTR at or near the Shine-Dalgarno sequence preventing ribosome-binding, thus repressing translation. Its main target seems to be the major flagellin gene, while its function is anatagonized by FliW. The sequence is that of Translational regulator CsrA from Geobacter sulfurreducens (strain ATCC 51573 / DSM 12127 / PCA).